A 566-amino-acid chain; its full sequence is Lamin-1 (566 aa).

Positions 1–37 (MSSRKGTRSSRIVTLERSANSSLSNNGGGDDSFGSTL) are disordered. S2 is modified (N-acetylserine). The head stretch occupies residues 13-47 (VTLERSANSSLSNNGGGDDSFGSTLLETSRLQEKD). Residues 45-387 (EKDHLTSLNS…ALLEGEEERL (343 aa)) form the IF rod domain. Residues 48–82 (HLTSLNSRLATYIDKVRQLEQENNRLQVQIRDIEV) are coil 1A. A linker 1 region spans residues 83 to 94 (VEKKEKSNLADR). The segment at 95 to 228 (FEAEKARLRR…AFALQQHKGE (134 aa)) is coil 1B. Residues 229–256 (LEEVRHKRQVDMTTYAKQINDEYQSKLQ) form a linker 2 region. The segment at 257 to 385 (DQIEEMRAQF…YQALLEGEEE (129 aa)) is coil 2. A tail region spans residues 386–566 (RLNLTQEAPQ…SDPADRCSIM (181 aa)). The LTD domain occupies 435–550 (RRSKLNKETV…DTVSSITVEF (116 aa)). The disordered stretch occupies residues 528–566 (GDNPSARLEDSEGDTVSSITVEFSESSDPSDPADRCSIM). Residues 541–556 (DTVSSITVEFSESSDP) show a composition bias toward polar residues. C563 carries the post-translational modification Cysteine methyl ester. C563 carries the S-farnesyl cysteine lipid modification. Residues 564–566 (SIM) constitute a propeptide, removed in mature form.

This sequence belongs to the intermediate filament family. In terms of assembly, interacts with LEM domain proteins lem-2 and emr-1. May interact with unc-84; this interaction may be required to complete the connection between the nuclear lamina and the cytoskeleton. In terms of tissue distribution, ubiquitous. Expressed in all cells, except in cells undergoing spermatogenesis.

Its subcellular location is the nucleus envelope. The protein resides in the nucleus inner membrane. Major component of the nuclear lamina, a fibrous layer on the nucleoplasmic side of the inner nuclear membrane. Provides a framework for the nuclear envelope and probably also interacts with chromatin. Essential to maintain the shape and integrity of the nucleus, and for DNA replication. Involved in spatial organization of nuclear pore complexes. It is not a target for ced-3 during apoptosis, suggesting that lamin cleavage is not essential for apoptosis in C.elegans. In Caenorhabditis elegans, this protein is Lamin-1.